A 512-amino-acid polypeptide reads, in one-letter code: NADH-quinone oxidoreductase subunit N 2 (512 aa).

14 consecutive transmembrane segments (helical) span residues 23–43 (AFVP…IDLF), 50–70 (TIIP…VYLQ), 88–108 (FAIF…LISI), 120–140 (SLGE…LMAS), 144–164 (LLMM…LVGY), 179–199 (VIYG…IYGL), 220–240 (ITLM…AGVV), 254–274 (PTPI…AMLI), 295–315 (WVTL…VVAL), 323–343 (LLAY…IVAD), 351–371 (LFYL…IILI), 394–414 (AASL…VGFI), 429–449 (VFVW…YFYF), and 477–497 (LVAF…PLSV).

This sequence belongs to the complex I subunit 2 family. NDH-1 is composed of 14 different subunits. Subunits NuoA, H, J, K, L, M, N constitute the membrane sector of the complex.

The protein resides in the cell inner membrane. It catalyses the reaction a quinone + NADH + 5 H(+)(in) = a quinol + NAD(+) + 4 H(+)(out). NDH-1 shuttles electrons from NADH, via FMN and iron-sulfur (Fe-S) centers, to quinones in the respiratory chain. The immediate electron acceptor for the enzyme in this species is believed to be a menaquinone. Couples the redox reaction to proton translocation (for every two electrons transferred, four hydrogen ions are translocated across the cytoplasmic membrane), and thus conserves the redox energy in a proton gradient. The sequence is that of NADH-quinone oxidoreductase subunit N 2 from Chloroherpeton thalassium (strain ATCC 35110 / GB-78).